A 417-amino-acid polypeptide reads, in one-letter code: Gamma-glutamyl phosphate reductase (417 aa).

This sequence belongs to the gamma-glutamyl phosphate reductase family.

It localises to the cytoplasm. The enzyme catalyses L-glutamate 5-semialdehyde + phosphate + NADP(+) = L-glutamyl 5-phosphate + NADPH + H(+). Its pathway is amino-acid biosynthesis; L-proline biosynthesis; L-glutamate 5-semialdehyde from L-glutamate: step 2/2. Its function is as follows. Catalyzes the NADPH-dependent reduction of L-glutamate 5-phosphate into L-glutamate 5-semialdehyde and phosphate. The product spontaneously undergoes cyclization to form 1-pyrroline-5-carboxylate. The polypeptide is Gamma-glutamyl phosphate reductase (Cronobacter sakazakii (strain ATCC BAA-894) (Enterobacter sakazakii)).